Reading from the N-terminus, the 311-residue chain is Olfactory receptor-like protein OLF1 (311 aa).

Residues 1–24 (MDGNYTLVTEFILLGFPTRPELQI) are Extracellular-facing. Asn-4 carries N-linked (GlcNAc...) asparagine glycosylation. The chain crosses the membrane as a helical span at residues 25–48 (VLFLVFLTLYGIILTGNIGLMMLI). Residues 49 to 56 (RTDPHLQT) are Cytoplasmic-facing. The chain crosses the membrane as a helical span at residues 57–78 (PMYFFLSNLSFADLCFSSAIVP). At 79 to 99 (KMLVNFLSENKSISLYGCALQ) the chain is on the extracellular side. Residues 100–119 (FYFSCAFADTESFILAAMAY) form a helical membrane-spanning segment. Over 120–138 (DRYVAICNPLLYTVVMSRG) the chain is Cytoplasmic. A helical membrane pass occupies residues 139-157 (ICVWLIVLSYIGGNMSSLV). The Extracellular portion of the chain corresponds to 158–195 (HTSFAFILKYCDKNVINHFFCDLPPLLKLSCTDTSVNE). Residues 196–218 (WLLSTYGSSVEIFCFIVIVISYY) traverse the membrane as a helical segment. Residues 219–235 (FILRSVLRIRSSSGRKK) are Cytoplasmic-facing. A helical membrane pass occupies residues 236-259 (TFSTCASHLTSVAIYQGTLLFIYS). Topologically, residues 260–271 (RPTYLYTPNTDK) are extracellular. The chain crosses the membrane as a helical span at residues 272–291 (IISVFYTIIIPVLNPLIYSL). The Cytoplasmic portion of the chain corresponds to 292–311 (RNKDVKDAAKRAVRLKVDSS).

This sequence belongs to the G-protein coupled receptor 1 family.

The protein localises to the cell membrane. In terms of biological role, putative odorant or sperm cell receptor. This chain is Olfactory receptor-like protein OLF1, found in Canis lupus familiaris (Dog).